Reading from the N-terminus, the 165-residue chain is Basic leucine zipper 43 (165 aa).

Residues 70–133 enclose the bZIP domain; it reads NERKQKRKIS…EKVIEENVQL (64 aa). Positions 72 to 93 are basic motif; that stretch reads RKQKRKISNRESARRSRMRKQR. The segment at 98–112 is leucine-zipper; the sequence is LWSQVMWLRDENHQL.

Forms heterodimers with BZIP34 and BZIP61.

The protein resides in the nucleus. Its function is as follows. Probable transcription factor involved in somatic embryogenesis. Acts as a positive regulator of BHLH109. In Arabidopsis thaliana (Mouse-ear cress), this protein is Basic leucine zipper 43.